The sequence spans 340 residues: DNA-directed RNA polymerase subunit alpha (340 aa).

Residues 1–236 form an alpha N-terminal domain (alpha-NTD) region; sequence MLSLSKNWNT…EQLQLFISFE (236 aa). The segment at 251–340 is alpha C-terminal domain (alpha-CTD); sequence FSPYLLKRVD…LSKRYEDSYN (90 aa).

This sequence belongs to the RNA polymerase alpha chain family. In terms of assembly, homodimer. The RNAP catalytic core consists of 2 alpha, 1 beta, 1 beta' and 1 omega subunit. When a sigma factor is associated with the core the holoenzyme is formed, which can initiate transcription.

The enzyme catalyses RNA(n) + a ribonucleoside 5'-triphosphate = RNA(n+1) + diphosphate. DNA-dependent RNA polymerase catalyzes the transcription of DNA into RNA using the four ribonucleoside triphosphates as substrates. The polypeptide is DNA-directed RNA polymerase subunit alpha (Rickettsia rickettsii (strain Iowa)).